The primary structure comprises 329 residues: Beta-ketoacyl-[acyl-carrier-protein] synthase III (329 aa).

Catalysis depends on residues Cys-123 and His-256. The tract at residues 257 to 261 (QANVR) is ACP-binding. Asn-286 is a catalytic residue.

Belongs to the thiolase-like superfamily. FabH family. In terms of assembly, homodimer.

It is found in the cytoplasm. The enzyme catalyses malonyl-[ACP] + acetyl-CoA + H(+) = 3-oxobutanoyl-[ACP] + CO2 + CoA. Its pathway is lipid metabolism; fatty acid biosynthesis. Catalyzes the condensation reaction of fatty acid synthesis by the addition to an acyl acceptor of two carbons from malonyl-ACP. Catalyzes the first condensation reaction which initiates fatty acid synthesis and may therefore play a role in governing the total rate of fatty acid production. Possesses both acetoacetyl-ACP synthase and acetyl transacylase activities. Its substrate specificity determines the biosynthesis of branched-chain and/or straight-chain of fatty acids. The sequence is that of Beta-ketoacyl-[acyl-carrier-protein] synthase III from Bordetella parapertussis (strain 12822 / ATCC BAA-587 / NCTC 13253).